Reading from the N-terminus, the 407-residue chain is Membrane protein MosC (407 aa).

The interval 1–24 (MTRTSPRHHAPSETKRRVPMGGVH) is disordered. 11 helical membrane-spanning segments follow: residues 31 to 51 (LTIT…AAWA), 69 to 89 (GVLL…AGYF), 109 to 129 (ALVL…IVLF), 157 to 177 (AFLH…FGVI), 186 to 206 (SVTL…HLLD), 225 to 245 (LLMF…IAEW), 255 to 275 (QVTD…MIAG), 290 to 310 (ALIA…LFMP), 316 to 336 (LAGF…IFSE), 347 to 367 (VGLT…PPII), and 377 to 397 (GRAL…SVFF).

The protein localises to the cell membrane. In terms of biological role, may be a membrane transport protein that could either transport a precursor for rhizopine biosynthesis into bacteroids or the finished product from the bacteroids. The protein is Membrane protein MosC (mosC) of Rhizobium meliloti (Ensifer meliloti).